The sequence spans 432 residues: Enolase (432 aa).

Residue Gln167 participates in (2R)-2-phosphoglycerate binding. Glu209 serves as the catalytic Proton donor. 3 residues coordinate Mg(2+): Asp246, Glu289, and Asp316. Lys341, Arg370, Ser371, and Lys392 together coordinate (2R)-2-phosphoglycerate. Lys341 serves as the catalytic Proton acceptor.

It belongs to the enolase family. It depends on Mg(2+) as a cofactor.

It is found in the cytoplasm. It localises to the secreted. The protein resides in the cell surface. The enzyme catalyses (2R)-2-phosphoglycerate = phosphoenolpyruvate + H2O. Its pathway is carbohydrate degradation; glycolysis; pyruvate from D-glyceraldehyde 3-phosphate: step 4/5. Its function is as follows. Catalyzes the reversible conversion of 2-phosphoglycerate (2-PG) into phosphoenolpyruvate (PEP). It is essential for the degradation of carbohydrates via glycolysis. This Thermotoga neapolitana (strain ATCC 49049 / DSM 4359 / NBRC 107923 / NS-E) protein is Enolase.